A 1131-amino-acid polypeptide reads, in one-letter code: Translation initiation factor IF-2 (1131 aa).

Residues 49–542 (KFKGSVSSNE…AFIMPKPQQS (494 aa)) form a disordered region. Positions 60-75 (KSIDNGKASRVEKPEK) are enriched in basic and acidic residues. Composition is skewed to polar residues over residues 76-88 (NNSV…QTPS) and 108-125 (SEQN…NIQS). Basic and acidic residues predominate over residues 127–138 (GDRKYQHTDRRP). Residues 139-152 (QGNNGEGPQTSTNS) are compositionally biased toward polar residues. 2 stretches are compositionally biased toward basic and acidic residues: residues 164–180 (GDRR…RPYN) and 223–239 (GDRR…RPYN). Residues 411–436 (GQGGYGGRPQGQGSYGGRPQGQGGYA) are compositionally biased toward gly residues. Composition is skewed to basic and acidic residues over residues 450 to 479 (KDFD…KSSI) and 487 to 530 (LTKE…DPNR). Residues 632–801 (KRPPVVCVMG…ILTAEMGELK (170 aa)) form the tr-type G domain. A G1 region spans residues 641 to 648 (GHVDHGKT). 641–648 (GHVDHGKT) is a GTP binding site. The segment at 666–670 (GITQH) is G2. Positions 687 to 690 (DTPG) are G3. GTP contacts are provided by residues 687–691 (DTPGH) and 741–744 (NKID). A G4 region spans residues 741–744 (NKID). Residues 777–779 (SAH) are G5.

The protein belongs to the TRAFAC class translation factor GTPase superfamily. Classic translation factor GTPase family. IF-2 subfamily.

The protein localises to the cytoplasm. Functionally, one of the essential components for the initiation of protein synthesis. Protects formylmethionyl-tRNA from spontaneous hydrolysis and promotes its binding to the 30S ribosomal subunits. Also involved in the hydrolysis of GTP during the formation of the 70S ribosomal complex. This chain is Translation initiation factor IF-2, found in Lachnoclostridium phytofermentans (strain ATCC 700394 / DSM 18823 / ISDg) (Clostridium phytofermentans).